A 473-amino-acid polypeptide reads, in one-letter code: Hyaluronidase-2 (473 aa).

An N-terminal signal peptide occupies residues 1–20 (MRAGLGPIITLALVLEVAWA). 2 disulfides stabilise this stretch: cysteine 47/cysteine 340 and cysteine 211/cysteine 227. 2 N-linked (GlcNAc...) asparagine glycosylation sites follow: asparagine 74 and asparagine 103. The active-site Proton donor is the glutamate 135. A glycan (N-linked (GlcNAc...) asparagine) is linked at asparagine 357. Residues 361-439 (ATQYCSWTQC…YLGWGGEQCQ (79 aa)) enclose the EGF-like domain. Disulfide bonds link cysteine 365–cysteine 376, cysteine 370–cysteine 427, and cysteine 429–cysteine 438. A lipid anchor (GPI-anchor amidated aspartate) is attached at aspartate 448. The propeptide at 449–473 (ASRAWAGAHLASLLGLVAMTLTWTL) is removed in mature form.

The protein belongs to the glycosyl hydrolase 56 family. Interacts with MST1R.

It is found in the cell membrane. It catalyses the reaction Random hydrolysis of (1-&gt;4)-linkages between N-acetyl-beta-D-glucosamine and D-glucuronate residues in hyaluronate.. Functionally, catalyzes hyaluronan degradation into small fragments that are endocytosed and degraded in lysosomes by HYAL1 and exoglycosidases. Essential for the breakdown of extracellular matrix hyaluronan. The chain is Hyaluronidase-2 (Hyal2) from Rattus norvegicus (Rat).